A 623-amino-acid polypeptide reads, in one-letter code: F-box protein FBX14 (623 aa).

The interval 18–48 (LNLNPPCSSSSSSSSAATFTNKSRNFKSSPP) is disordered. Residues 33-45 (AATFTNKSRNFKS) show a composition bias toward polar residues. Residues 54-97 (VLENVLENVLQFLTSRCDRNAVSLVCRSWYRVEAQTRLEVFIGN) enclose the F-box domain. Lys-119 is a 1D-myo-inositol hexakisphosphate binding site. Residues 126-127 (DF) form an interaction with auxin-responsive proteins region. 1D-myo-inositol hexakisphosphate-binding positions include 158–159 (KR) and Arg-391. The tract at residues 394 to 399 (PFDPRE) is interaction with auxin-responsive proteins. 447–449 (VFR) contacts 1D-myo-inositol hexakisphosphate. Residues 451–455 (CIMGR) are interaction with auxin-responsive proteins. A 1D-myo-inositol hexakisphosphate-binding site is contributed by Arg-482. The interaction with auxin-responsive proteins stretch occupies residues 510–511 (AF). 1D-myo-inositol hexakisphosphate is bound by residues 530–531 (QK) and Arg-555.

In terms of assembly, part of a SCF (SKP1-cullin-F-box) protein ligase complex. May interact with auxin and auxin-responsive proteins.

The protein resides in the nucleus. Its pathway is protein modification; protein ubiquitination. The sequence is that of F-box protein FBX14 (FBX14) from Arabidopsis thaliana (Mouse-ear cress).